We begin with the raw amino-acid sequence, 477 residues long: Argininosuccinate lyase (477 aa).

Over residues Met1–Gly18 the composition is skewed to polar residues. The tract at residues Met1–Gly21 is disordered.

This sequence belongs to the lyase 1 family. Argininosuccinate lyase subfamily.

It localises to the cytoplasm. It carries out the reaction 2-(N(omega)-L-arginino)succinate = fumarate + L-arginine. It participates in amino-acid biosynthesis; L-arginine biosynthesis; L-arginine from L-ornithine and carbamoyl phosphate: step 3/3. The polypeptide is Argininosuccinate lyase (Acinetobacter baylyi (strain ATCC 33305 / BD413 / ADP1)).